The sequence spans 1142 residues: Serine/threonine-protein kinase dst2 (1142 aa).

Residues Phe20–Val276 enclose the Protein kinase domain. ATP is bound by residues Ile26 to Val34 and Lys49. The active-site Proton acceptor is the Asp141. The segment covering Leu300–Asp322 has biased composition (acidic residues). 5 disordered regions span residues Leu300 to Glu492, Lys515 to Pro636, Glu744 to Arg768, Ser939 to Thr974, and Glu1040 to Asp1142. The segment covering Ser323–Ser336 has biased composition (basic and acidic residues). A compositionally biased stretch (polar residues) spans Gln355–Leu365. The segment covering Gln371–Gln390 has biased composition (low complexity). A compositionally biased stretch (polar residues) spans Pro391 to Asn413. Residues Ala421 to Gly452 show a composition bias toward low complexity. A compositionally biased stretch (basic and acidic residues) spans Ser467–Thr477. Residues Lys541–Ser554 show a composition bias toward low complexity. Composition is skewed to basic and acidic residues over residues Ala555–Gln588, Lys597–Thr635, Glu744–Ile760, and Ser939–Lys969. Positions Gln716–Lys1050 form a coiled coil. Residues Thr1068 to Asn1091 are compositionally biased toward low complexity.

This sequence belongs to the protein kinase superfamily. STE Ser/Thr protein kinase family. STE20 subfamily. Mg(2+) serves as cofactor.

It catalyses the reaction L-seryl-[protein] + ATP = O-phospho-L-seryl-[protein] + ADP + H(+). It carries out the reaction L-threonyl-[protein] + ATP = O-phospho-L-threonyl-[protein] + ADP + H(+). The protein is Serine/threonine-protein kinase dst2 of Dictyostelium discoideum (Social amoeba).